A 514-amino-acid polypeptide reads, in one-letter code: 2,3-bisphosphoglycerate-independent phosphoglycerate mutase (514 aa).

Mn(2+) is bound by residues Asp14 and Ser64. Ser64 functions as the Phosphoserine intermediate in the catalytic mechanism. Substrate contacts are provided by residues His125, 155–156 (RD), Arg187, Arg193, 263–266 (RADR), and Lys336. Mn(2+)-binding residues include Asp403, His407, Asp444, His445, and His463.

Belongs to the BPG-independent phosphoglycerate mutase family. In terms of assembly, monomer. It depends on Mn(2+) as a cofactor.

It catalyses the reaction (2R)-2-phosphoglycerate = (2R)-3-phosphoglycerate. It functions in the pathway carbohydrate degradation; glycolysis; pyruvate from D-glyceraldehyde 3-phosphate: step 3/5. In terms of biological role, catalyzes the interconversion of 2-phosphoglycerate and 3-phosphoglycerate. In Shewanella sediminis (strain HAW-EB3), this protein is 2,3-bisphosphoglycerate-independent phosphoglycerate mutase.